We begin with the raw amino-acid sequence, 516 residues long: Homeobox protein 6 (516 aa).

Over residues 22-31 the composition is skewed to low complexity; sequence NYDFDNKNNS. 3 disordered regions span residues 22 to 140, 200 to 256, and 268 to 348; these read NYDF…PNCN, SLNN…SSPS, and DEND…NNGD. Positions 32–41 are enriched in gly residues; the sequence is IGGGGGGGGS. 3 stretches are compositionally biased toward low complexity: residues 42-59, 66-78, and 101-132; these read SSSRSSSSRSSSNRSSSG, SNSSSSINNIINS, and TTTTTTTTTTTTTTTTTKNENISSSESENSSS. Low complexity predominate over residues 284–346; sequence NNNNNNNNNN…NNNNTNTNNN (63 aa). 2 consecutive DNA-binding regions (homeobox) follow at residues 362–421 and 424–483; these read KSGQ…SKSG and SYAK…NKLS. The interval 483 to 516 is disordered; the sequence is SSKAIQDKDNQDNDNNNSNNNENNDDSYSDEGLF. Positions 495 to 504 are enriched in low complexity; the sequence is NDNNNSNNNE. Residues 505–516 are compositionally biased toward acidic residues; the sequence is NNDDSYSDEGLF.

It is found in the nucleus. In terms of biological role, putative transcription factor. In Dictyostelium discoideum (Social amoeba), this protein is Homeobox protein 6 (hbx6).